The chain runs to 416 residues: Catalase-peroxidase 2 (416 aa).

The first 20 residues, 1–20, serve as a signal peptide directing secretion; the sequence is MLLPLIVFLLSVLIHHRIYS.

This sequence belongs to the peroxidase family. Peroxidase/catalase subfamily. As to quaternary structure, homodimer or homotetramer. Heme b serves as cofactor. In terms of processing, formation of the three residue Trp-Tyr-Met cross-link is important for the catalase, but not the peroxidase activity of the enzyme.

It catalyses the reaction H2O2 + AH2 = A + 2 H2O. It carries out the reaction 2 H2O2 = O2 + 2 H2O. In terms of biological role, bifunctional enzyme with both catalase and broad-spectrum peroxidase activity. The protein is Catalase-peroxidase 2 (katG2) of Alkaliphilus metalliredigens (strain QYMF).